A 424-amino-acid chain; its full sequence is Dihydroorotase (424 aa).

2 residues coordinate Zn(2+): His-61 and His-63. Substrate-binding positions include 63–65 (HLR) and Asn-95. Asp-153, His-180, and His-233 together coordinate Zn(2+). Asn-279 provides a ligand contact to substrate. Asp-306 is a binding site for Zn(2+). Asp-306 is a catalytic residue. Position 310 (His-310) interacts with substrate.

The protein belongs to the metallo-dependent hydrolases superfamily. DHOase family. Class I DHOase subfamily. Zn(2+) serves as cofactor.

It carries out the reaction (S)-dihydroorotate + H2O = N-carbamoyl-L-aspartate + H(+). The protein operates within pyrimidine metabolism; UMP biosynthesis via de novo pathway; (S)-dihydroorotate from bicarbonate: step 3/3. Functionally, catalyzes the reversible cyclization of carbamoyl aspartate to dihydroorotate. This Pelobacter propionicus (strain DSM 2379 / NBRC 103807 / OttBd1) protein is Dihydroorotase.